Here is a 325-residue protein sequence, read N- to C-terminus: MKVFDYEDVQLIPNKCIVNSRSECDTTVTLGKHSFKMPVVPANMQTIIDETIAETLAENGYFYIMHRFDEEARVPFIKKMQQKGLITSISVGVKEGEYAFVETLAREGLVPDYVTIDIAHGHSNAVINMIQHLKKSLPETFVIAGNVGTPEAVRELENAGADATKVGIGPGKVCITKIKTGFGTGGWQLAALRWCAKAARKPIIADGGIRTHGDIAKSVRFGATMVMIGSLFAGHEESPGETKVEDGVVYKEYFGSASEFQKGEKKNVEGKKIWLRHKGKLADTLVEMQQDLQSSISYAGGRDLEAIRKVDYVIVKNSIFNGDTI.

Cys174 acts as the Thioimidate intermediate in catalysis. 203-226 contacts NADP(+); that stretch reads IIADGGIRTHGDIAKSVRFGATMV.

It belongs to the IMPDH/GMPR family. GuaC type 2 subfamily.

It catalyses the reaction IMP + NH4(+) + NADP(+) = GMP + NADPH + 2 H(+). Functionally, catalyzes the irreversible NADPH-dependent deamination of GMP to IMP. It functions in the conversion of nucleobase, nucleoside and nucleotide derivatives of G to A nucleotides, and in maintaining the intracellular balance of A and G nucleotides. The chain is GMP reductase from Enterococcus faecalis (strain ATCC 700802 / V583).